The following is a 432-amino-acid chain: Glutamyl-tRNA reductase (432 aa).

Substrate-binding positions include 49–52, Ser109, 114–116, and Gln120; these read TCNR and EGQ. The Nucleophile role is filled by Cys50. 198-203 contacts NADP(+); sequence GAGRMS.

The protein belongs to the glutamyl-tRNA reductase family. As to quaternary structure, homodimer.

The catalysed reaction is (S)-4-amino-5-oxopentanoate + tRNA(Glu) + NADP(+) = L-glutamyl-tRNA(Glu) + NADPH + H(+). Its pathway is porphyrin-containing compound metabolism; protoporphyrin-IX biosynthesis; 5-aminolevulinate from L-glutamyl-tRNA(Glu): step 1/2. The protein operates within porphyrin-containing compound metabolism; chlorophyll biosynthesis. Functionally, catalyzes the NADPH-dependent reduction of glutamyl-tRNA(Glu) to glutamate 1-semialdehyde (GSA). The polypeptide is Glutamyl-tRNA reductase (Synechococcus sp. (strain CC9902)).